The chain runs to 234 residues: 3-deoxy-manno-octulosonate cytidylyltransferase (234 aa).

Belongs to the KdsB family.

It is found in the cytoplasm. The catalysed reaction is 3-deoxy-alpha-D-manno-oct-2-ulosonate + CTP = CMP-3-deoxy-beta-D-manno-octulosonate + diphosphate. It participates in nucleotide-sugar biosynthesis; CMP-3-deoxy-D-manno-octulosonate biosynthesis; CMP-3-deoxy-D-manno-octulosonate from 3-deoxy-D-manno-octulosonate and CTP: step 1/1. It functions in the pathway bacterial outer membrane biogenesis; lipopolysaccharide biosynthesis. Functionally, activates KDO (a required 8-carbon sugar) for incorporation into bacterial lipopolysaccharide in Gram-negative bacteria. This is 3-deoxy-manno-octulosonate cytidylyltransferase from Aquifex aeolicus (strain VF5).